The primary structure comprises 372 residues: Queuine tRNA-ribosyltransferase (372 aa).

Asp-92 (proton acceptor) is an active-site residue. Substrate contacts are provided by residues 92–96 (DSGGF), Asp-146, Gln-188, and Gly-215. Residues 246-252 (GIGTLRE) are RNA binding. Asp-265 (nucleophile) is an active-site residue. The tract at residues 270–274 (TRLGR) is RNA binding; important for wobble base 34 recognition. The Zn(2+) site is built by Cys-303, Cys-305, Cys-308, and His-334.

The protein belongs to the queuine tRNA-ribosyltransferase family. In terms of assembly, homodimer. Within each dimer, one monomer is responsible for RNA recognition and catalysis, while the other monomer binds to the replacement base PreQ1. The cofactor is Zn(2+).

It catalyses the reaction 7-aminomethyl-7-carbaguanine + guanosine(34) in tRNA = 7-aminomethyl-7-carbaguanosine(34) in tRNA + guanine. The protein operates within tRNA modification; tRNA-queuosine biosynthesis. Catalyzes the base-exchange of a guanine (G) residue with the queuine precursor 7-aminomethyl-7-deazaguanine (PreQ1) at position 34 (anticodon wobble position) in tRNAs with GU(N) anticodons (tRNA-Asp, -Asn, -His and -Tyr). Catalysis occurs through a double-displacement mechanism. The nucleophile active site attacks the C1' of nucleotide 34 to detach the guanine base from the RNA, forming a covalent enzyme-RNA intermediate. The proton acceptor active site deprotonates the incoming PreQ1, allowing a nucleophilic attack on the C1' of the ribose to form the product. After dissociation, two additional enzymatic reactions on the tRNA convert PreQ1 to queuine (Q), resulting in the hypermodified nucleoside queuosine (7-(((4,5-cis-dihydroxy-2-cyclopenten-1-yl)amino)methyl)-7-deazaguanosine). The sequence is that of Queuine tRNA-ribosyltransferase from Prochlorococcus marinus (strain MIT 9313).